The following is a 161-amino-acid chain: MQANSRAYFLLIALVSFGLVGVALYLQFEKGYQPCPLCVMQRFAFIGIGIFSLLAAVAQNTRSLWQGLGMLSGIAGIAVAVYHVSLLLNPKASCGIDPLENWVNALPTAKALPQVFYADGLCTAPLPPVLGLSVPAWSLIWLFILTLTLAVGLIRREKNFR.

At 1–8 (MQANSRAY) the chain is on the cytoplasmic side. Residues 9-25 (FLLIALVSFGLVGVALY) form a helical membrane-spanning segment. Residues 26–43 (LQFEKGYQPCPLCVMQRF) lie on the Periplasmic side of the membrane. An intrachain disulfide couples Cys-35 to Cys-38. A helical transmembrane segment spans residues 44 to 58 (AFIGIGIFSLLAAVA). The Cytoplasmic portion of the chain corresponds to 59-63 (QNTRS). The helical transmembrane segment at 64-81 (LWQGLGMLSGIAGIAVAV) threads the bilayer. At 82 to 136 (YHVSLLLNPKASCGIDPLENWVNALPTAKALPQVFYADGLCTAPLPPVLGLSVPA) the chain is on the periplasmic side. Cys-94 and Cys-122 are disulfide-bonded. Residues 137–155 (WSLIWLFILTLTLAVGLIR) traverse the membrane as a helical segment. Over 156-161 (REKNFR) the chain is Cytoplasmic.

Belongs to the DsbB family.

The protein localises to the cell inner membrane. Required for disulfide bond formation in some periplasmic proteins. Acts by oxidizing the DsbA protein. The sequence is that of Disulfide bond formation protein B from Cupriavidus necator (strain ATCC 17699 / DSM 428 / KCTC 22496 / NCIMB 10442 / H16 / Stanier 337) (Ralstonia eutropha).